The chain runs to 123 residues: Cliotide T4 (123 aa).

Positions M1–A28 are cleaved as a signal peptide. Positions G29–N58 form a cross-link, cyclopeptide (Gly-Asn). Disulfide bonds link C32-C48, C36-C50, and C41-C55. Positions H59 to N123 are cleaved as a propeptide — removed in mature form.

Post-translationally, contains 3 disulfide bonds. This is a cyclic peptide. As to expression, expressed in flower, stem, shoot, root, leaf, seed, pod and nodule (at protein level).

Functionally, probably participates in a plant defense mechanism. Active against Gram-negative bacteria E.coli ATCC 700926 (MIC=1.0 uM), K.pneumoniae ATTC 13883 (MIC=5.5 uM) and P.aeruginosa ATCC 39018 (MIC=7.5 uM). Has hemolytic and cytotoxic activity. In Clitoria ternatea (Butterfly pea), this protein is Cliotide T4.